A 481-amino-acid polypeptide reads, in one-letter code: MADQISLLLVVFTAAVALLHLIYRWWNAQRGQKRTSNEKNQELHLPPGSTGWPLIGETYSYYRSMTSNRPRQFIDDREKRYDSDVFVSHLFGSQAVISSDPQFNKYVLQNEGRFFQAHYPKALKALIGDYGLLSVHGDLQRKLHGIAVNLLRFERLKFDFMEEIQNLVHSTLDRWVDKKEIALQNECHQMVLNLMAKQLLDLSPSKETNEICELFVDYTNAVIAIPIKIPGSTYAKGLKARELLIRKISNMIKERRDHPHIVHKDLLTKLLEEDSISDEIICDFILFLLFAGHETSSRAMTFAIKFLTTCPKALTQMKEEHDAILKAKGGHKKLEWDDYKSMKFTQCVINETLRLGNFGPGVFRETKEDTKVKDCLIPKGWVVFAFLTATHLDEKFHNEALTFNPWRWELDQDVSNNHLFSPFGGGARLCPGSHLARLELALFLHIFITRFRWEALADEHPSYFPLPYLAKGFPMRLYNRE.

Residues alanine 2–isoleucine 22 form a helical membrane-spanning segment. Residue cysteine 430 coordinates heme.

The protein belongs to the cytochrome P450 family. Heme is required as a cofactor. In terms of tissue distribution, expressed in young tissues such as flushing buds and green bark tissues. Lower levels in mature needles and bark.

Its subcellular location is the membrane. It carries out the reaction abieta-7,13-dien-18-ol + 2 reduced [NADPH--hemoprotein reductase] + 2 O2 = abieta-7,13-dien-18-oate + 2 oxidized [NADPH--hemoprotein reductase] + 3 H2O + 3 H(+). Functionally, multifunctional and multisubstrate cytochrome P450 that oxidizes the respective carbon 18 of abietadienol, abietadienal, levopimaradienol, isopimara-7,15-dienol, isopimara-7,15-dienal, dehydroabietadienol, and dehydroabietadienal. The protein is Abietadienol/abietadienal oxidase (CYP720B1) of Pinus taeda (Loblolly pine).